A 503-amino-acid polypeptide reads, in one-letter code: Ferulic acid decarboxylase 1 (503 aa).

Mn(2+) is bound by residues Asn-170, His-193, and Glu-236. Prenylated FMN contacts are provided by residues 170 to 175 (NWSIAR), 192 to 193 (QH), and Glu-236. Residue Glu-285 is the Proton donor of the active site. Position 394 (Lys-394) interacts with prenylated FMN.

It belongs to the UbiD family. UbiD-like/FDC subfamily. In terms of assembly, homodimer. May form higher order oligomers. Mn(2+) serves as cofactor. Prenylated FMN is required as a cofactor.

The protein localises to the cytoplasm. It catalyses the reaction (E)-4-coumarate + H(+) = 4-vinylphenol + CO2. The enzyme catalyses (E)-cinnamate + H(+) = styrene + CO2. The catalysed reaction is (E)-ferulate + H(+) = 2-methoxy-4-vinylphenol + CO2. In terms of biological role, catalyzes the reversible decarboxylation of aromatic carboxylic acids like ferulic acid, p-coumaric acid or cinnamic acid, producing the corresponding vinyl derivatives 4-vinylphenol, 4-vinylguaiacol, and styrene, respectively, which play the role of aroma metabolites. Not essential for ubiquinone synthesis. The polypeptide is Ferulic acid decarboxylase 1 (Saccharomyces cerevisiae (strain ATCC 204508 / S288c) (Baker's yeast)).